The primary structure comprises 837 residues: MTQVTVKQLADEVKTPVERLLQQMREAGLPHTAAEENVTDSEKQSLLTHLKSSHKAKVEEPRKITLQRKTTSTLRVAGSKSISVEVRKKKVFVQRSPEEIEAERKRELDERRAVENAARQKAEEEARVRAEEEARRQPAAPSAPAEAVAAPAPVAEPVREAAPVVAAAPAADTRKRDEQRRPDKPRADDNNRRGGDGERKNAPHRASVKEKAPAPRVAPRTTDEESDGFRRGGRGKAKLKKRNAHGFQSPTGPVVREVKIGETITVGDLAQQMSVKAAEIIKFMFKLGTPATINQVLDQETAQLVAEELGHKVTLVSDTALEDSLAESLKFEGEAVPRAPVVTVMGHVDHGKTSLLDYIRRAKVAAGEAGGITQHIGAYHVETERGMVTFLDTPGHAAFTAMRARGAKATDIVILVVAADDGVMPQTIEAVQHAVAAGVPLVVAVNKIDKPGADLDRIRSELSAHGVTSEDWGGDTPFVPVSAKMGTGVDELLEAVLLQAEVLELTATPSAPGRGVVVESRLDKGRGPVATVLVQDGTLRQGDMVLVGSNYGRVRAMLDENGKPIKEAGPAIPVEILGLDGTPDAGDEMSVVADEKKAREVALFRQGKFREVKLARAHAGKLENIFESMGQEEKKTLNIVLKSDVRGSLEALQGALNGLGNDEVQVRVVGGGVGGITESDANLALASNAVLFGFNVRADAGARKIVEQEGLDMRYYNVIYDIIEDVKKALTGMLGSDVRENILGVAEVRDVFRSPKFGAIAGCMVIEGTVHRNRPIRVLREDIVIFEGELESLRRFKDDASEVRAGMECGIGVKSYNDVKVGDKIEVFEKVQVARSL.

The disordered stretch occupies residues 94 to 252 (QRSPEEIEAE…NAHGFQSPTG (159 aa)). Residues 96 to 136 (SPEEIEAERKRELDERRAVENAARQKAEEEARVRAEEEARR) show a composition bias toward basic and acidic residues. The segment covering 137–171 (QPAAPSAPAEAVAAPAPVAEPVREAAPVVAAAPAA) has biased composition (low complexity). Basic and acidic residues-rich tracts occupy residues 172–213 (DTRK…EKAP) and 221–230 (TTDEESDGFR). Over residues 231–244 (RGGRGKAKLKKRNA) the composition is skewed to basic residues. The region spanning 337–506 (PRAPVVTVMG…LLQAEVLELT (170 aa)) is the tr-type G domain. The tract at residues 346 to 353 (GHVDHGKT) is G1. Residue 346–353 (GHVDHGKT) coordinates GTP. Residues 371-375 (GITQH) form a G2 region. The tract at residues 392-395 (DTPG) is G3. Residues 392–396 (DTPGH) and 446–449 (NKID) contribute to the GTP site. Positions 446-449 (NKID) are G4. The segment at 482–484 (SAK) is G5.

This sequence belongs to the TRAFAC class translation factor GTPase superfamily. Classic translation factor GTPase family. IF-2 subfamily.

It localises to the cytoplasm. Its function is as follows. One of the essential components for the initiation of protein synthesis. Protects formylmethionyl-tRNA from spontaneous hydrolysis and promotes its binding to the 30S ribosomal subunits. Also involved in the hydrolysis of GTP during the formation of the 70S ribosomal complex. In Pseudomonas fluorescens (strain Pf0-1), this protein is Translation initiation factor IF-2.